The following is a 205-amino-acid chain: Regulator of G-protein signaling 4 (205 aa).

S-palmitoyl cysteine attachment occurs at residues C2, C12, and C95. The region spanning 62-178 (SLENLINHEC…LKSRFYLDLT (117 aa)) is the RGS domain.

Either Cys-2 or Cys-12 or both are palmitoylated. In terms of processing, phosphorylated by cyclic GMP-dependent protein kinase.

In terms of biological role, inhibits signal transduction by increasing the GTPase activity of G protein alpha subunits thereby driving them into their inactive GDP-bound form. Activity on G(z)-alpha is inhibited by phosphorylation of the G-protein. Activity on G(z)-alpha and G(i)-alpha-1 is inhibited by palmitoylation of the G-protein. The protein is Regulator of G-protein signaling 4 (Rgs4) of Rattus norvegicus (Rat).